A 164-amino-acid chain; its full sequence is Lipoprotein signal peptidase (164 aa).

3 helical membrane-spanning segments follow: residues 12–32 (WLWLVVVVLIIDLGSKYLILQ), 70–90 (WFFAGIAIGISVILAVMMYRS), and 102–122 (ALIIGGALGNLFDRLWHGFVV). Active-site residues include aspartate 123 and aspartate 141. Residues 137 to 157 (FNLADTAICVGAALIVLEGFL) traverse the membrane as a helical segment.

The protein belongs to the peptidase A8 family.

Its subcellular location is the cell inner membrane. The catalysed reaction is Release of signal peptides from bacterial membrane prolipoproteins. Hydrolyzes -Xaa-Yaa-Zaa-|-(S,diacylglyceryl)Cys-, in which Xaa is hydrophobic (preferably Leu), and Yaa (Ala or Ser) and Zaa (Gly or Ala) have small, neutral side chains.. Its pathway is protein modification; lipoprotein biosynthesis (signal peptide cleavage). Functionally, this protein specifically catalyzes the removal of signal peptides from prolipoproteins. The sequence is that of Lipoprotein signal peptidase from Escherichia coli O9:H4 (strain HS).